Consider the following 389-residue polypeptide: Chalcone synthase 6 (389 aa).

Residue Cys164 is part of the active site.

This sequence belongs to the thiolase-like superfamily. Chalcone/stilbene synthases family.

It catalyses the reaction (E)-4-coumaroyl-CoA + 3 malonyl-CoA + 3 H(+) = 2',4,4',6'-tetrahydroxychalcone + 3 CO2 + 4 CoA. It participates in secondary metabolite biosynthesis; flavonoid biosynthesis. In terms of biological role, the primary product of this enzyme is 4,2',4',6'-tetrahydroxychalcone (also termed naringenin-chalcone or chalcone) which can under specific conditions spontaneously isomerize into naringenin. This Trifolium subterraneum (Subterranean clover) protein is Chalcone synthase 6 (CHS6).